The following is a 468-amino-acid chain: Argininosuccinate lyase (468 aa).

Belongs to the lyase 1 family. Argininosuccinate lyase subfamily.

The protein localises to the cytoplasm. It carries out the reaction 2-(N(omega)-L-arginino)succinate = fumarate + L-arginine. The protein operates within amino-acid biosynthesis; L-arginine biosynthesis; L-arginine from L-ornithine and carbamoyl phosphate: step 3/3. The sequence is that of Argininosuccinate lyase from Zymomonas mobilis subsp. mobilis (strain ATCC 31821 / ZM4 / CP4).